The sequence spans 219 residues: ATP synthase subunit a (219 aa).

6 helical membrane-spanning segments follow: residues 16–36 (LSNWLSMLIPLLFMVMSFWLI), 57–79 (LLMGPASFGANILVIALFLFILF), 96–116 (LAVTLSLAVPLWISFILYTWI), 122–142 (ALAHLVPLGTPAPLMPFMVLM), 158–178 (LAANMIAGHLLLTLLGAQGTL), and 184–204 (TSIVVFSQIILLMLEFSVAII).

It belongs to the ATPase A chain family. F-type ATPases have 2 components, CF(1) - the catalytic core - and CF(0) - the membrane proton channel. CF(1) has five subunits: alpha(3), beta(3), gamma(1), delta(1), epsilon(1). CF(0) has three main subunits: a, b and c.

It is found in the mitochondrion inner membrane. In terms of biological role, mitochondrial membrane ATP synthase (F(1)F(0) ATP synthase or Complex V) produces ATP from ADP in the presence of a proton gradient across the membrane which is generated by electron transport complexes of the respiratory chain. F-type ATPases consist of two structural domains, F(1) - containing the extramembraneous catalytic core and F(0) - containing the membrane proton channel, linked together by a central stalk and a peripheral stalk. During catalysis, ATP synthesis in the catalytic domain of F(1) is coupled via a rotary mechanism of the central stalk subunits to proton translocation. Key component of the proton channel; it may play a direct role in the translocation of protons across the membrane. In Artemia franciscana (Brine shrimp), this protein is ATP synthase subunit a (ATP6).